Here is a 54-residue protein sequence, read N- to C-terminus: Lectin alpha chain (54 aa).

This sequence belongs to the leguminous lectin family. Tetramer of two alpha and two beta chains.

This is Lectin alpha chain from Lathyrus odoratus (Sweet pea).